The sequence spans 319 residues: MSSRSIVFMGTPEFACPTLQALIDRGERLLAVVTQPDRPKGRGHKLMPPPVKELALAHDIPVLQPHRVRASAFVESIRQLAPELIVVVAFGQILPKALLDIPPLGCVNVHASLLPRYRGAAPLNWCIINGETETGVTTMLMDTGLDTGPMLLKRSTPIDENEDIVSLHDRMASLGAELLAETLDGLREGRIEPQPQNDSLSCYAPLLKKEHGLIDWQRPARQIHNQVRGLAAWPGAQTLLNGHALKLFRTRVADGAGAPGTVLCSTGGQLEVACLDGSLLIQELQLAGKKRLDSASFLAGCPIAEGTLLGGAATERPIP.

112–115 (SLLP) is a binding site for (6S)-5,6,7,8-tetrahydrofolate.

Belongs to the Fmt family.

It catalyses the reaction L-methionyl-tRNA(fMet) + (6R)-10-formyltetrahydrofolate = N-formyl-L-methionyl-tRNA(fMet) + (6S)-5,6,7,8-tetrahydrofolate + H(+). Its function is as follows. Attaches a formyl group to the free amino group of methionyl-tRNA(fMet). The formyl group appears to play a dual role in the initiator identity of N-formylmethionyl-tRNA by promoting its recognition by IF2 and preventing the misappropriation of this tRNA by the elongation apparatus. In Pelobacter propionicus (strain DSM 2379 / NBRC 103807 / OttBd1), this protein is Methionyl-tRNA formyltransferase.